Reading from the N-terminus, the 294-residue chain is Shell matrix protein (294 aa).

Component of the organic matrix of calcified shell layers like nacre and prisms.

The protein resides in the secreted. This Mytilus californianus (California mussel) protein is Shell matrix protein.